The primary structure comprises 368 residues: MTVTRIGVGGTSTPYDVVVGNGILGELPALVGERAQRVAVIHPDTLEEKARPVCEILRTAGYDVFPLPVPDGEAAKDVSVAADLWARLGQAAFTRTDVIVGVGGGATTDLAGFVAATWLRGVRAILVPTTLLGMVDAAVGGKTGINTAEGKNLVGAFHPPAGVVCDLDTLPSLPREDYIGGLAEVIKAGFIADPVILDLVEADPEAATRPDGAHTRELIERAIAVKAEVVSADLRESGRREILNYGHTLGHAIERAENYTFRHGYAISIGMVFAAELARLDGRIDAALVARHRRILESVGLPVRYRADAWPALRDTIRVDKKTRGATLRFVVLDDVAAPAILAGPSDALLAQAYQAVSGVAPDAPDTD.

NAD(+)-binding positions include 71 to 76 (DGEAAK), 105 to 109 (GATTD), 129 to 130 (TT), Lys-142, and Lys-151. Residues Glu-184, His-247, and His-263 each contribute to the Zn(2+) site.

The protein belongs to the sugar phosphate cyclases superfamily. Dehydroquinate synthase family. Co(2+) serves as cofactor. Requires Zn(2+) as cofactor. NAD(+) is required as a cofactor.

The protein localises to the cytoplasm. It carries out the reaction 7-phospho-2-dehydro-3-deoxy-D-arabino-heptonate = 3-dehydroquinate + phosphate. The protein operates within metabolic intermediate biosynthesis; chorismate biosynthesis; chorismate from D-erythrose 4-phosphate and phosphoenolpyruvate: step 2/7. Its function is as follows. Catalyzes the conversion of 3-deoxy-D-arabino-heptulosonate 7-phosphate (DAHP) to dehydroquinate (DHQ). The sequence is that of 3-dehydroquinate synthase from Thermobifida fusca (strain YX).